The following is a 147-amino-acid chain: Echinoidin (147 aa).

In terms of domain architecture, C-type lectin spans 1–143 (GCCPTFWTSF…STRHYLICKL (143 aa)). 3 cysteine pairs are disulfide-bonded: C3/C14, C31/C141, and C116/C132. A glycan (O-linked (Hex) serine) is linked at S38. The Cell attachment site motif lies at 39 to 41 (RGD).

In terms of assembly, homodimer; disulfide-linked. The identity of the saccharide is not reported in PubMed:3571253, and it is unlikely to be N-acetylgalactosamine. The sugar attached to Ser-38 is represented simply as Hex. In terms of tissue distribution, coelemic fluid.

It localises to the secreted. In terms of biological role, role in the defense system of the organism against microorganisms. This lectin is specific for Gal-GalNAc. This is Echinoidin from Heliocidaris crassispina (Sea urchin).